A 205-amino-acid chain; its full sequence is dITP/XTP pyrophosphatase (205 aa).

11–16 (TKNMGK) lines the substrate pocket. Mg(2+) contacts are provided by Glu-44 and Asp-73. The active-site Proton acceptor is Asp-73. Substrate is bound by residues Ser-74, 158-161 (FGYD), Lys-181, and 186-187 (HR).

This sequence belongs to the HAM1 NTPase family. As to quaternary structure, homodimer. Requires Mg(2+) as cofactor.

The catalysed reaction is XTP + H2O = XMP + diphosphate + H(+). It carries out the reaction dITP + H2O = dIMP + diphosphate + H(+). It catalyses the reaction ITP + H2O = IMP + diphosphate + H(+). Functionally, pyrophosphatase that catalyzes the hydrolysis of nucleoside triphosphates to their monophosphate derivatives, with a high preference for the non-canonical purine nucleotides XTP (xanthosine triphosphate), dITP (deoxyinosine triphosphate) and ITP. Seems to function as a house-cleaning enzyme that removes non-canonical purine nucleotides from the nucleotide pool, thus preventing their incorporation into DNA/RNA and avoiding chromosomal lesions. This is dITP/XTP pyrophosphatase from Bacillus thuringiensis subsp. konkukian (strain 97-27).